The following is a 221-amino-acid chain: Large ribosomal subunit protein uL1 (221 aa).

This sequence belongs to the universal ribosomal protein uL1 family. Part of the 50S ribosomal subunit.

Functionally, probably involved in E site tRNA release. Binds directly to 23S rRNA. Protein L1 is also a translational repressor protein, it controls the translation of its operon by binding to its mRNA. This chain is Large ribosomal subunit protein uL1, found in Sulfolobus acidocaldarius (strain ATCC 33909 / DSM 639 / JCM 8929 / NBRC 15157 / NCIMB 11770).